The following is a 277-amino-acid chain: Large ribosomal subunit protein uL2 (277 aa).

The segment at 226–277 (NPIDHPHGGGEGRTSGGRHPVTPWGKPTKGKKTRSNKSTNKFILISRHKRKK) is disordered.

The protein belongs to the universal ribosomal protein uL2 family. In terms of assembly, part of the 50S ribosomal subunit. Forms a bridge to the 30S subunit in the 70S ribosome.

One of the primary rRNA binding proteins. Required for association of the 30S and 50S subunits to form the 70S ribosome, for tRNA binding and peptide bond formation. It has been suggested to have peptidyltransferase activity; this is somewhat controversial. Makes several contacts with the 16S rRNA in the 70S ribosome. This is Large ribosomal subunit protein uL2 from Rhodopseudomonas palustris (strain BisA53).